Consider the following 593-residue polypeptide: Corrinoid activation enzyme RamQ (593 aa).

The region spanning 1–76 (MRVLFPLLEE…GMEIYASREQ (76 aa)) is the 2Fe-2S ferredoxin-type domain. Residues Cys35, Cys41, Cys44, and Cys60 each coordinate [2Fe-2S] cluster.

It depends on [2Fe-2S] cluster as a cofactor.

In terms of biological role, involved in the degradation of the quaternary amines L-proline betaine and L-carnitine. Component of a corrinoid-dependent methyltransferase system that transfers a methyl group from L-proline betaine or L-carnitine to tetrahydrofolate (THF), forming methyl-THF, a key intermediate in the Wood-Ljungdahl acetogenesis pathway. RamQ is not required for the methyl transfer, but it stimulates reduction of reconstituted MtqC from the Co(II) state to the Co(I) state in vitro. It also stimulates the rate of THF methylation. This chain is Corrinoid activation enzyme RamQ, found in Eubacterium limosum.